Here is a 134-residue protein sequence, read N- to C-terminus: MYRYPVEVIADTYLSKVGGYSYELDRNEIGINVKALEMNTSIIANETLATLKRFEEIRPYFLRRKFVVVGIEESMDCYEMSANGEVVLPEEMEGSMEVGESVIVNTVEAFRIDGDYSNIIKAIKWRLDNQILRN.

This is an uncharacterized protein from Archaeoglobus fulgidus (strain ATCC 49558 / DSM 4304 / JCM 9628 / NBRC 100126 / VC-16).